The following is a 311-amino-acid chain: MPRFVYFCFALIALLPISWTMDGILITDVEIHVDVCQISCKASNTASLLINDAPFTPMCNSAGDQIFFTYNGTAAISDLKNVTFILEVTTDTKNCTFTANYTGYFTPDPKSKPFQLGFASATLNRDMGKVTKTIMEDSGEMVEQDFSNSSAVPTPASTTPLPQSTVAHLTIAYVHLQYEETKTVVNKNGGAVAVAVIEGIALIAILAFLGYRTMVNHKLQNSTRTNGLYGYDNNNSSRITVPDAMRMSDIPPPRDPMYASPPTPLSQPTPARNTVMTTQELVVPTANSSAAQPSTTSNGQFNDPFATLESW.

The N-terminal stretch at Met1–Thr20 is a signal peptide. The Extracellular segment spans residues Met21–Asn188. The chain crosses the membrane as a helical span at residues Gly189–Leu209. Residues Gly210–Trp311 lie on the Cytoplasmic side of the membrane. Over residues Asn287–Phe301 the composition is skewed to polar residues. A disordered region spans residues Asn287–Trp311.

As to expression, expressed in the intestinal lumen. Also present, at lower levels, in the excretory duct cells.

The protein localises to the apical cell membrane. The protein resides in the cytoplasm. Plays a role in RNA-mediated gene silencing by mediating endocytic uptake of double-stranded RNA (dsRNA) ingested from the environment into intestinal cells from the intestinal lumen. Selective for dsRNAs of at least 50 bp. Required for avoidance behavior induced by small RNAs derived from pathogenic bacteria such as P.aeruginosa. This is Systemic RNA interference defective protein 2 from Caenorhabditis elegans.